A 132-amino-acid polypeptide reads, in one-letter code: Small ribosomal subunit protein uS11 (132 aa).

This sequence belongs to the universal ribosomal protein uS11 family. As to quaternary structure, part of the 30S ribosomal subunit. Interacts with proteins S7 and S18. Binds to IF-3.

Its function is as follows. Located on the platform of the 30S subunit, it bridges several disparate RNA helices of the 16S rRNA. Forms part of the Shine-Dalgarno cleft in the 70S ribosome. The chain is Small ribosomal subunit protein uS11 from Chlamydia trachomatis serovar L2 (strain ATCC VR-902B / DSM 19102 / 434/Bu).